The following is a 442-amino-acid chain: 5-methylthioadenosine/S-adenosylhomocysteine deaminase (442 aa).

H72 and H74 together coordinate Zn(2+). Residues E101 and H194 each coordinate substrate. H221 provides a ligand contact to Zn(2+). Residues E224 and D309 each contribute to the substrate site. D309 serves as a coordination point for Zn(2+).

The protein belongs to the metallo-dependent hydrolases superfamily. MTA/SAH deaminase family. Zn(2+) is required as a cofactor.

The catalysed reaction is S-adenosyl-L-homocysteine + H2O + H(+) = S-inosyl-L-homocysteine + NH4(+). It carries out the reaction S-methyl-5'-thioadenosine + H2O + H(+) = S-methyl-5'-thioinosine + NH4(+). In terms of biological role, catalyzes the deamination of 5-methylthioadenosine and S-adenosyl-L-homocysteine into 5-methylthioinosine and S-inosyl-L-homocysteine, respectively. Is also able to deaminate adenosine. The polypeptide is 5-methylthioadenosine/S-adenosylhomocysteine deaminase (Teredinibacter turnerae (strain ATCC 39867 / T7901)).